The following is a 468-amino-acid chain: Probable cytosol aminopeptidase (468 aa).

Mn(2+) is bound by residues Lys-242 and Asp-247. Residue Lys-254 is part of the active site. Mn(2+)-binding residues include Asp-265, Asp-324, and Glu-326. The active site involves Arg-328.

It belongs to the peptidase M17 family. It depends on Mn(2+) as a cofactor.

Its subcellular location is the cytoplasm. It carries out the reaction Release of an N-terminal amino acid, Xaa-|-Yaa-, in which Xaa is preferably Leu, but may be other amino acids including Pro although not Arg or Lys, and Yaa may be Pro. Amino acid amides and methyl esters are also readily hydrolyzed, but rates on arylamides are exceedingly low.. The enzyme catalyses Release of an N-terminal amino acid, preferentially leucine, but not glutamic or aspartic acids.. Presumably involved in the processing and regular turnover of intracellular proteins. Catalyzes the removal of unsubstituted N-terminal amino acids from various peptides. This Neisseria meningitidis serogroup A / serotype 4A (strain DSM 15465 / Z2491) protein is Probable cytosol aminopeptidase.